The primary structure comprises 1016 residues: Poly [ADP-ribose] polymerase 1 (1016 aa).

N-acetylalanine is present on Ala-2. The segment at 9 to 93 adopts a PARP-type 1 zinc-finger fold; that stretch reads YRVEYAKSGR…TIKKMAETGG (85 aa). Residues Cys-21 and Cys-24 each contribute to the Zn(2+) site. Phosphoserine is present on Ser-41. His-53 and Cys-56 together coordinate Zn(2+). 2 positions are modified to N6-acetyllysine: Lys-100 and Lys-108. The segment at 116 to 206 adopts a PARP-type 2 zinc-finger fold; sequence FGAGYAKSNR…TLKKQLPAIK (91 aa). The Zn(2+) site is built by Cys-128 and Cys-131. N6-acetyllysine is present on Lys-134. Zn(2+)-binding residues include His-162 and Cys-165. Residues Ser-180 and Ser-188 each carry the phosphoserine modification. Residue Lys-206 forms a Glycyl lysine isopeptide (Lys-Gly) (interchain with G-Cter in SUMO1); alternate linkage. Lys-206 is covalently cross-linked (Glycyl lysine isopeptide (Lys-Gly) (interchain with G-Cter in SUMO2); alternate). Short sequence motifs (nuclear localization signal) lie at residues 210 to 212 and 224 to 229; these read KRK and KKKSKK. A PADR1 zinc-binding domain is found at 228–362; that stretch reads KKEKDKEIKL…IKKQDRIFPP (135 aa). Lys-252 participates in a covalent cross-link: Glycyl lysine isopeptide (Lys-Gly) (interchain with G-Cter in SUMO2). Ser-277 and Ser-280 each carry phosphoserine. The segment at 293 to 335 is zinc ribbon; the sequence is GALLPCEECSGQLVFKGDAYYCTGDVTAWTKCMVKTQTPNRKE. 4 residues coordinate Zn(2+): Cys-298, Cys-301, Cys-314, and Cys-324. A disordered region spans residues 360–390; it reads FPPESSTPVGAAAPPSAASAPAAVHSGPPDK. Positions 365 to 386 are enriched in low complexity; it reads STPVGAAAPPSAASAPAAVHSG. The segment at 376–526 is automodification domain; sequence AASAPAAVHS…GTNKSEKRMK (151 aa). The region spanning 387–478 is the BRCT domain; that stretch reads PPDKPLSNMK…KSLQELLSTH (92 aa). Residue Asp-389 is modified to PolyADP-ribosyl aspartic acid. Residues Glu-409, Glu-415, Glu-437, Glu-446, Glu-447, Glu-450, and Glu-458 each carry the polyADP-ribosyl glutamic acid modification. A Glycyl lysine isopeptide (Lys-Gly) (interchain with G-Cter in SUMO2) cross-link involves residue Lys-469. Residues Glu-473 and Glu-486 each carry the polyADP-ribosyl glutamic acid modification. Lys-488 is covalently cross-linked (Glycyl lysine isopeptide (Lys-Gly) (interchain with G-Cter in SUMO1); alternate). A Glycyl lysine isopeptide (Lys-Gly) (interchain with G-Cter in SUMO2); alternate cross-link involves residue Lys-488. A polyADP-ribosyl glutamic acid mark is found at Glu-490 and Glu-493. The tract at residues 494-523 is disordered; the sequence is AVGPKGKSGAAPSKKSKGPVKEEGTNKSEK. Positions 496 to 506 are enriched in low complexity; that stretch reads GPKGKSGAAPS. ADP-ribosylserine is present on residues Ser-501, Ser-506, and Ser-509. Basic and acidic residues predominate over residues 512–523; that stretch reads PVKEEGTNKSEK. A Glycyl lysine isopeptide (Lys-Gly) (interchain with G-Cter in SUMO2) cross-link involves residue Lys-514. PolyADP-ribosyl glutamic acid occurs at positions 515 and 516. The residue at position 521 (Ser-521) is an ADP-ribosylserine. Glu-522 carries the polyADP-ribosyl glutamic acid modification. Lys-523 is modified (N6-(ADP-ribosyl)lysine). Lys-530 is covalently cross-linked (Glycyl lysine isopeptide (Lys-Gly) (interchain with G-Cter in SUMO2)). Residues 544–640 form the WGR domain; sequence NAHVLEKGGK…KNFTKHPKKF (97 aa). Thr-596 bears the Phosphothreonine mark. N6-acetyllysine is present on residues Lys-602 and Lys-623. One can recognise a PARP alpha-helical domain in the interval 664–781; the sequence is KSKLPKPVQN…DIEVAYSLLR (118 aa). Lys-750 participates in a covalent cross-link: Glycyl lysine isopeptide (Lys-Gly) (interchain with G-Cter in SUMO1); alternate. Lys-750 is covalently cross-linked (Glycyl lysine isopeptide (Lys-Gly) (interchain with G-Cter in SUMO2); alternate). 2 positions are modified to phosphoserine: Ser-784 and Ser-788. The region spanning 790–1016 is the PARP catalytic domain; sequence DPIDVNYEKL…LKFNFKTSLW (227 aa). Residues 864–866, Gly-873, Arg-880, and Ser-906 each bind NAD(+); that span reads HGS. Glu-990 acts as the For poly [ADP-ribose] polymerase activity in catalysis.

It belongs to the ARTD/PARP family. As to quaternary structure, homodimer; PARP-type zinc-fingers from separate PARP1 molecules form a dimer module that specifically recognizes DNA strand breaks. Heterodimer; heterodimerizes with PARP2. Interacts (via the PARP catalytic domain) with HPF1. Interacts with NMNAT1. Interacts with nucleosomes; with a preference for nucleosomes containing H2A.X. Interacts with APTX. Component of a base excision repair (BER) complex, containing at least XRCC1, PARP1, PARP2, POLB and LRIG3. Interacts with SRY. The SWAP complex consists of NPM1, NCL, PARP1 and SWAP70. Interacts with TIAM2. Interacts with PARP3; leading to activate PARP1 in absence of DNA. Interacts (when poly-ADP-ribosylated) with CHD1L (via macro domain). Interacts with the DNA polymerase alpha catalytic subunit POLA1; this interaction functions as part of the control of replication fork progression. Interacts with EEF1A1 and TXK. Interacts with RNF4. Interacts with RNF146. Interacts with ZNF423. Interacts with APLF. Interacts with SNAI1 (via zinc fingers); the interaction requires SNAI1 to be poly-ADP-ribosylated and non-phosphorylated (active) by GSK3B. Interacts (when poly-ADP-ribosylated) with PARP9. Interacts with NR4A3; activates PARP1 by improving acetylation of PARP1 and suppressing the interaction between PARP1 and SIRT1. Interacts (via catalytic domain) with PUM3; the interaction inhibits the poly-ADP-ribosylation activity of PARP1 and the degradation of PARP1 by CASP3 following genotoxic stress. Interacts with ZNF365. Interacts with RRP1B. Interacts with TIMELESS; the interaction is direct. Interacts with CGAS; leading to impede the formation of the PARP1-TIMELESS complex. Interacts with KHDC3L, the interaction is increased following the formation of DNA double-strand breaks. Interacts (when auto-poly-ADP-ribosylated) with XRCC1; leading to inhibit PARP1 ADP-ribosyltransferase activity. Interacts with SPINDOC; promoting PARP1 ADP-ribosyltransferase activity. Interacts with BANF1; leading to inhibit PARP1 ADP-ribosyltransferase activity in response to oxidative DNA damage. Interacts (when sumoylated and ubiquitinated) with VCP/p97; leading to its extraction from chromatin. Interacts with YARS1; promoting PARP1 ADP-ribosyltransferase activity. Interacts with PACMP micropeptide; Interacts with PACMP micropeptide; interaction. Interacts (when poly-ADP-ribosylated) with isoform 1 of MACROH2A1; MACROH2A1 specifically binds to poly-ADP-ribose chains and inhibits PARP1 activity, limiting the consumption of nuclear NAD(+). Interacts with CARM1; promoting recruitment to replication forks. Interacts with RECQL. Interacts with ZNF32; the interaction reshapes ZNF432 interacting proteins. Interacts with TPRN; TPRN interacts with a number of DNA damage response proteins, is recruited to sites of DNA damage and may play a role in DNA damage repair. In terms of assembly, interacts (when auto-poly-ADP-ribosylated) with AIFM1. In terms of processing, poly-ADP-ribosylated on serine, glutamate and aspartate residues by autocatalysis. Auto-ADP-ribosylation on serine takes place following interaction with HPF1. Auto poly-ADP-ribosylation on serine residues promotes its dissociation from chromatin. Poly-ADP-ribosylated by PARP2; poly-ADP-ribosylation mediates the recruitment of CHD1L to DNA damage sites. Mono-ADP-ribosylated at Lys-523 by SIRT6 in response to oxidative stress, promoting recruitment to double-strand breaks (DSBs) sites. S-nitrosylated, leading to inhibit transcription regulation activity. Post-translationally, phosphorylated at Thr-596 by PRKDC in response to DNA damage following virus infection, promoting its translocation to the cytosol. Phosphorylated by TXK. In terms of processing, proteolytically cleaved by caspase-3 (CASP3) and caspase-7 (CASP7) in response to apoptosis to generate the Poly [ADP-ribose] polymerase 1, processed N-terminus and Poly [ADP-ribose] polymerase 1, processed C-terminus forms. Sumoylated with SUMO1 or SUMO2 by PIAS4 following prolonged residence (trapping) to chromatin. Sumoylation promotes ubiquitination by RNF4 and removal from chromatin by VCP/p97. Post-translationally, ubiquitinated by RNF4 following sumoylation by PIAS4 in response to prolonged residence (trapping) to chromatin. Ubiquitination promotes removal from chromatin by VCP/p97.

It is found in the chromosome. Its subcellular location is the nucleus. The protein localises to the nucleolus. The protein resides in the cytoplasm. It localises to the cytosol. The catalysed reaction is NAD(+) + (ADP-D-ribosyl)n-acceptor = nicotinamide + (ADP-D-ribosyl)n+1-acceptor + H(+).. The enzyme catalyses L-seryl-[protein] + NAD(+) = O-(ADP-D-ribosyl)-L-seryl-[protein] + nicotinamide + H(+). It catalyses the reaction L-aspartyl-[protein] + NAD(+) = 4-O-(ADP-D-ribosyl)-L-aspartyl-[protein] + nicotinamide. It carries out the reaction L-glutamyl-[protein] + NAD(+) = 5-O-(ADP-D-ribosyl)-L-glutamyl-[protein] + nicotinamide. The catalysed reaction is L-tyrosyl-[protein] + NAD(+) = O-(ADP-D-ribosyl)-L-tyrosyl-[protein] + nicotinamide + H(+). The enzyme catalyses L-histidyl-[protein] + NAD(+) = N(tele)-(ADP-D-ribosyl)-L-histidyl-[protein] + nicotinamide + H(+). Its activity is regulated as follows. ADP-ribosyltransferase activity is regulated via an allosteric activation mechanism. In absence of activation signal, PARP1 is autoinhibited by the PARP alpha-helical domain (also named HD region), which prevents effective NAD(+)-binding. Activity is highly stimulated by signals, such as DNA strand breaks. Binding to damaged DNA unfolds the PARP alpha-helical domain, relieving autoinhibition. Poly-ADP-ribosyltransferase activity is tightly regulated and PARP1 is removed from damaged chromatin following initial poly-ADP-ribosylation of chromatin to avoid prolonged residence (trapping) that has cytotoxic consequences. A number of factors (VCP/p97) or post-translational modifications (auto-poly-ADP-ribosylation or ubiquitination) promote PARP1 removal from chromatin. Poly-ADP-ribosyltransferase that mediates poly-ADP-ribosylation of proteins and plays a key role in DNA repair. Mediates glutamate, aspartate, serine, histidine or tyrosine ADP-ribosylation of proteins: the ADP-D-ribosyl group of NAD(+) is transferred to the acceptor carboxyl group of target residues and further ADP-ribosyl groups are transferred to the 2'-position of the terminal adenosine moiety, building up a polymer with an average chain length of 20-30 units. Serine ADP-ribosylation of proteins constitutes the primary form of ADP-ribosylation of proteins in response to DNA damage. Specificity for the different amino acids is conferred by interacting factors, such as HPF1 and NMNAT1. Following interaction with HPF1, catalyzes serine ADP-ribosylation of target proteins; HPF1 confers serine specificity by completing the PARP1 active site. Also catalyzes tyrosine ADP-ribosylation of target proteins following interaction with HPF1. Following interaction with NMNAT1, catalyzes glutamate and aspartate ADP-ribosylation of target proteins; NMNAT1 confers glutamate and aspartate specificity. PARP1 initiates the repair of DNA breaks: recognizes and binds DNA breaks within chromatin and recruits HPF1, licensing serine ADP-ribosylation of target proteins, such as histones (H2BS6ADPr and H3S10ADPr), thereby promoting decompaction of chromatin and the recruitment of repair factors leading to the reparation of DNA strand breaks. HPF1 initiates serine ADP-ribosylation but restricts the polymerase activity of PARP1 in order to limit the length of poly-ADP-ribose chains. In addition to base excision repair (BER) pathway, also involved in double-strand breaks (DSBs) repair: together with TIMELESS, accumulates at DNA damage sites and promotes homologous recombination repair by mediating poly-ADP-ribosylation. Mediates the poly-ADP-ribosylation of a number of proteins, including itself, APLF, CHFR and NFAT5. In addition to proteins, also able to ADP-ribosylate DNA: catalyzes ADP-ribosylation of DNA strand break termini containing terminal phosphates and a 2'-OH group in single- and double-stranded DNA, respectively. Required for PARP9 and DTX3L recruitment to DNA damage sites. PARP1-dependent PARP9-DTX3L-mediated ubiquitination promotes the rapid and specific recruitment of 53BP1/TP53BP1, UIMC1/RAP80, and BRCA1 to DNA damage sites. PARP1-mediated DNA repair in neurons plays a role in sleep: senses DNA damage in neurons and promotes sleep, facilitating efficient DNA repair. In addition to DNA repair, also involved in other processes, such as transcription regulation, programmed cell death, membrane repair, adipogenesis and innate immunity. Acts as a repressor of transcription: binds to nucleosomes and modulates chromatin structure in a manner similar to histone H1, thereby altering RNA polymerase II. Acts both as a positive and negative regulator of transcription elongation, depending on the context. Acts as a positive regulator of transcription elongation by mediating poly-ADP-ribosylation of NELFE, preventing RNA-binding activity of NELFE and relieving transcription pausing. Acts as a negative regulator of transcription elongation in response to DNA damage by catalyzing poly-ADP-ribosylation of CCNT1, disrupting the phase separation activity of CCNT1 and subsequent activation of CDK9. Involved in replication fork progression following interaction with CARM1: mediates poly-ADP-ribosylation at replication forks, slowing fork progression. Poly-ADP-ribose chains generated by PARP1 also play a role in poly-ADP-ribose-dependent cell death, a process named parthanatos. Also acts as a negative regulator of the cGAS-STING pathway. Acts by mediating poly-ADP-ribosylation of CGAS: PARP1 translocates into the cytosol following phosphorylation by PRKDC and catalyzes poly-ADP-ribosylation and inactivation of CGAS. Acts as a negative regulator of adipogenesis: catalyzes poly-ADP-ribosylation of histone H2B on 'Glu-35' (H2BE35ADPr) following interaction with NMNAT1, inhibiting phosphorylation of H2B at 'Ser-36' (H2BS36ph), thereby blocking expression of pro-adipogenetic genes. Involved in the synthesis of ATP in the nucleus, together with NMNAT1, PARG and NUDT5. Nuclear ATP generation is required for extensive chromatin remodeling events that are energy-consuming. In terms of biological role, promotes AIFM1-mediated apoptosis. This form, which translocates into the cytoplasm following cleavage by caspase-3 (CASP3) and caspase-7 (CASP7) in response to apoptosis, is auto-poly-ADP-ribosylated and serves as a poly-ADP-ribose carrier to induce AIFM1-mediated apoptosis. Its function is as follows. This cleavage form irreversibly binds to DNA breaks and interferes with DNA repair, promoting DNA damage-induced apoptosis. This is Poly [ADP-ribose] polymerase 1 (PARP1) from Bos taurus (Bovine).